A 247-amino-acid polypeptide reads, in one-letter code: Ribonuclease 3 (247 aa).

The RNase III domain maps to 21-149; sequence FKKLSKKIGI…LVGAIYLDRG (129 aa). A Mg(2+)-binding site is contributed by E62. The active site involves D66. Positions 135 and 138 each coordinate Mg(2+). Residue E138 is part of the active site. Residues 176–245 form the DRBM domain; that stretch reads DYKTQLQEYS…AKELYIRIRR (70 aa).

This sequence belongs to the ribonuclease III family. In terms of assembly, homodimer. The cofactor is Mg(2+).

It localises to the cytoplasm. The enzyme catalyses Endonucleolytic cleavage to 5'-phosphomonoester.. Its function is as follows. Digests double-stranded RNA. Involved in the processing of primary rRNA transcript to yield the immediate precursors to the large and small rRNAs (23S and 16S). Processes some mRNAs, and tRNAs when they are encoded in the rRNA operon. Processes pre-crRNA and tracrRNA of type II CRISPR loci if present in the organism. This is Ribonuclease 3 from Leptospira borgpetersenii serovar Hardjo-bovis (strain L550).